Consider the following 216-residue polypeptide: V-type ATP synthase subunit D (216 aa).

Belongs to the V-ATPase D subunit family.

Its function is as follows. Produces ATP from ADP in the presence of a proton gradient across the membrane. The sequence is that of V-type ATP synthase subunit D from Clostridium botulinum (strain ATCC 19397 / Type A).